The primary structure comprises 196 residues: Small ribosomal subunit protein uS4c (196 aa).

Residues 17–38 are disordered; it reads ALPGLTRKTPKSRSNLKKKFHS. A compositionally biased stretch (basic residues) spans 24 to 38; that stretch reads KTPKSRSNLKKKFHS. An S4 RNA-binding domain is found at 89–169; the sequence is MRLDNILFRL…LPKHLTIDTL (81 aa).

Belongs to the universal ribosomal protein uS4 family. In terms of assembly, part of the 30S ribosomal subunit. Contacts protein S5. The interaction surface between S4 and S5 is involved in control of translational fidelity.

Its subcellular location is the plastid. The protein resides in the chloroplast. Its function is as follows. One of the primary rRNA binding proteins, it binds directly to 16S rRNA where it nucleates assembly of the body of the 30S subunit. With S5 and S12 plays an important role in translational accuracy. The chain is Small ribosomal subunit protein uS4c (rps4) from Lygeum spartum.